We begin with the raw amino-acid sequence, 143 residues long: Interleukin-3 (143 aa).

A signal peptide spans 1–23 (MSSFPILHLLLLLLGCQVPQAQG). The N-linked (GlcNAc...) asparagine glycan is linked to N79.

This sequence belongs to the IL-3 family. Monomer.

It localises to the secreted. Its function is as follows. Granulocyte/macrophage colony-stimulating factors are cytokines that act in hematopoiesis by controlling the production, differentiation, and function of 2 related white cell populations of the blood, the granulocytes and the monocytes-macrophages. In terms of biological role, this CSF induces granulocytes, macrophages, mast cells, stem cells, erythroid cells, eosinophils and megakaryocytes. The protein is Interleukin-3 (IL3) of Canis lupus familiaris (Dog).